The sequence spans 109 residues: Nucleoid-associated protein YbaB (109 aa).

The protein belongs to the YbaB/EbfC family. As to quaternary structure, homodimer.

Its subcellular location is the cytoplasm. The protein localises to the nucleoid. Its function is as follows. Binds to DNA and alters its conformation. May be involved in regulation of gene expression, nucleoid organization and DNA protection. The polypeptide is Nucleoid-associated protein YbaB (Escherichia coli O127:H6 (strain E2348/69 / EPEC)).